Reading from the N-terminus, the 445-residue chain is Probable glycine dehydrogenase (decarboxylating) subunit 1 (445 aa).

The protein belongs to the GcvP family. N-terminal subunit subfamily. As to quaternary structure, the glycine cleavage system is composed of four proteins: P, T, L and H. In this organism, the P 'protein' is a heterodimer of two subunits.

It carries out the reaction N(6)-[(R)-lipoyl]-L-lysyl-[glycine-cleavage complex H protein] + glycine + H(+) = N(6)-[(R)-S(8)-aminomethyldihydrolipoyl]-L-lysyl-[glycine-cleavage complex H protein] + CO2. Its function is as follows. The glycine cleavage system catalyzes the degradation of glycine. The P protein binds the alpha-amino group of glycine through its pyridoxal phosphate cofactor; CO(2) is released and the remaining methylamine moiety is then transferred to the lipoamide cofactor of the H protein. This is Probable glycine dehydrogenase (decarboxylating) subunit 1 from Citrifermentans bemidjiense (strain ATCC BAA-1014 / DSM 16622 / JCM 12645 / Bem) (Geobacter bemidjiensis).